Consider the following 190-residue polypeptide: Protein LZIC (190 aa).

Residues 2–63 are a coiled coil; it reads ASRGKTETSK…SEFNDSLKKI (62 aa).

It belongs to the CTNNBIP1 family. In terms of assembly, does not interact with CTNNB1.

This is Protein LZIC (Lzic) from Mus musculus (Mouse).